The chain runs to 118 residues: Large ribosomal subunit protein uL18 (118 aa).

The segment at M1–L22 is disordered. Residues L10 to G20 show a composition bias toward basic residues.

Belongs to the universal ribosomal protein uL18 family. As to quaternary structure, part of the 50S ribosomal subunit; part of the 5S rRNA/L5/L18/L25 subcomplex. Contacts the 5S and 23S rRNAs.

In terms of biological role, this is one of the proteins that bind and probably mediate the attachment of the 5S RNA into the large ribosomal subunit, where it forms part of the central protuberance. This Streptococcus thermophilus (strain ATCC BAA-491 / LMD-9) protein is Large ribosomal subunit protein uL18.